We begin with the raw amino-acid sequence, 232 residues long: Peptide deformylase (232 aa).

Fe cation-binding residues include Cys-135 and His-178. Residue Glu-179 is part of the active site. His-182 contributes to the Fe cation binding site.

It belongs to the polypeptide deformylase family. The cofactor is Fe(2+).

It catalyses the reaction N-terminal N-formyl-L-methionyl-[peptide] + H2O = N-terminal L-methionyl-[peptide] + formate. Its function is as follows. Removes the formyl group from the N-terminal Met of newly synthesized proteins. Requires at least a dipeptide for an efficient rate of reaction. N-terminal L-methionine is a prerequisite for activity but the enzyme has broad specificity at other positions. In Deinococcus radiodurans (strain ATCC 13939 / DSM 20539 / JCM 16871 / CCUG 27074 / LMG 4051 / NBRC 15346 / NCIMB 9279 / VKM B-1422 / R1), this protein is Peptide deformylase.